The primary structure comprises 142 residues: MIKKNKEELNDMEYLVTQENGTEPPFQNEYWNHFEKGIYVDKLSGKPLFTSEDKFESNCGWPSFSKALNDDEIVELVDKSFGMIRTEVRSEKANSHLGHVFNDGPKEKGGLRYCINSAAIQFIPYDKLEELGYGDLIKHFKK.

The MsrB domain occupies 2-125 (IKKNKEELND…NSAAIQFIPY (124 aa)). Cysteine 114 serves as the catalytic Nucleophile.

It belongs to the MsrB Met sulfoxide reductase family.

The enzyme catalyses L-methionyl-[protein] + [thioredoxin]-disulfide + H2O = L-methionyl-(R)-S-oxide-[protein] + [thioredoxin]-dithiol. The polypeptide is Peptide methionine sulfoxide reductase MsrB (Staphylococcus epidermidis (strain ATCC 35984 / DSM 28319 / BCRC 17069 / CCUG 31568 / BM 3577 / RP62A)).